Consider the following 558-residue polypeptide: uncharacterized protein (558 aa).

The span at 338 to 354 shows a compositional bias: low complexity; that stretch reads STSTSTSTSTSSSNDLN. Residues 338–380 form a disordered region; it reads STSTSTSTSTSSSNDLNLDSDSDDSDSDDSDSDSDSDSDSEID. Residues 355–380 show a composition bias toward acidic residues; the sequence is LDSDSDDSDSDDSDSDSDSDSDSEID.

The protein localises to the plastid. This is an uncharacterized protein from Euglena longa (Euglenophycean alga).